Consider the following 500-residue polypeptide: Apolipoprotein N-acyltransferase (500 aa).

6 helical membrane passes run V5–V25, L38–T58, L74–I94, I111–W131, A145–V165, and L185–A205. Positions L215–N462 constitute a CN hydrolase domain. E261 serves as the catalytic Proton acceptor. The active site involves K318. C369 serves as the catalytic Nucleophile. A helical membrane pass occupies residues D469–W489.

It belongs to the CN hydrolase family. Apolipoprotein N-acyltransferase subfamily.

It localises to the cell inner membrane. The catalysed reaction is N-terminal S-1,2-diacyl-sn-glyceryl-L-cysteinyl-[lipoprotein] + a glycerophospholipid = N-acyl-S-1,2-diacyl-sn-glyceryl-L-cysteinyl-[lipoprotein] + a 2-acyl-sn-glycero-3-phospholipid + H(+). The protein operates within protein modification; lipoprotein biosynthesis (N-acyl transfer). In terms of biological role, catalyzes the phospholipid dependent N-acylation of the N-terminal cysteine of apolipoprotein, the last step in lipoprotein maturation. This Nostoc sp. (strain PCC 7120 / SAG 25.82 / UTEX 2576) protein is Apolipoprotein N-acyltransferase.